The sequence spans 338 residues: MTRF1L release factor glutamine methyltransferase (338 aa).

Residues 167 to 171 (GCGSG), D190, W225, and N239 contribute to the S-adenosyl-L-methionine site. 239-242 (NPPY) serves as a coordination point for substrate.

The protein belongs to the protein N5-glutamine methyltransferase family.

The protein localises to the mitochondrion. The enzyme catalyses L-glutaminyl-[peptide chain release factor] + S-adenosyl-L-methionine = N(5)-methyl-L-glutaminyl-[peptide chain release factor] + S-adenosyl-L-homocysteine + H(+). Its function is as follows. N5-glutamine methyltransferase responsible for the methylation of the glutamine residue in the universally conserved GGQ motif of the mitochondrial translation release factors MTRF1, MTRF1L, MRPL58/ICT1 and MTRFR. This chain is MTRF1L release factor glutamine methyltransferase (HEMK1), found in Homo sapiens (Human).